A 540-amino-acid polypeptide reads, in one-letter code: Bifunctional ribokinase/ribose-5-phosphate isomerase A (540 aa).

The tract at residues 1–308 (MKKIIVVGST…AILNVINQDQ (308 aa)) is ribokinase. Substrate-binding positions include 11-13 (NVD), 39-44 (GGKGAN), and Glu-141. Residues Asn-185 and 221–226 (TVGGRG) each bind ATP. Residues Asp-247 and Thr-249 each contribute to the K(+) site. 252–253 (GD) is a binding site for ATP. Asp-253 is a binding site for substrate. Residue Asp-253 is the Proton acceptor; for ribokinase activity of the active site. K(+)-binding residues include Thr-284, Val-287, Gly-289, and Ser-293. The interval 309 to 540 (MTKTEIEKQK…IKTIKRSDLS (232 aa)) is ribose-5-phosphate isomerase A. Residues 339–342 (SGTT), 395–398 (DGAD), and 408–411 (KGGG) each bind substrate. Glu-417 serves as the catalytic Proton acceptor; for ribose-5-phosphate isomerase activity. Residue Lys-435 coordinates substrate.

This sequence in the N-terminal section; belongs to the carbohydrate kinase PfkB family. Ribokinase subfamily. It in the C-terminal section; belongs to the ribose 5-phosphate isomerase family. Requires Mg(2+) as cofactor.

It localises to the cytoplasm. The catalysed reaction is D-ribose + ATP = D-ribose 5-phosphate + ADP + H(+). It catalyses the reaction aldehydo-D-ribose 5-phosphate = D-ribulose 5-phosphate. It participates in carbohydrate metabolism; D-ribose degradation; D-ribose 5-phosphate from beta-D-ribopyranose: step 2/2. Its pathway is carbohydrate degradation; pentose phosphate pathway; D-ribose 5-phosphate from D-ribulose 5-phosphate (non-oxidative stage): step 1/1. Activated by a monovalent cation that binds near, but not in, the active site. The most likely occupant of the site in vivo is potassium. Also activated by ammonium ion. Ion binding induces a conformational change that may alter substrate affinity. In terms of biological role, bifunctional enzyme that catalyzes the phosphorylation of ribose at O-5 in a reaction requiring ATP and magnesium, and the reversible conversion of ribose 5-phosphate to ribulose 5-phosphate. The protein is Bifunctional ribokinase/ribose-5-phosphate isomerase A (rbsK/rbiA) of Fructilactobacillus sanfranciscensis (strain ATCC 27651 / DSM 20451 / JCM 5668 / CCUG 30143 / KCTC 3205 / NCIMB 702811 / NRRL B-3934 / L-12) (Lactobacillus sanfranciscensis).